The chain runs to 421 residues: BEN domain-containing protein 5 (421 aa).

Lysine 133 carries the N6-acetyllysine modification. Residues 180–243 (RALYEELLRN…LNRRLQDVLL (64 aa)) adopt a coiled-coil conformation. Lysine 258 is covalently cross-linked (Glycyl lysine isopeptide (Lys-Gly) (interchain with G-Cter in SUMO2)). The 107-residue stretch at 302-408 (GSGIWVDEEK…EKIMDINKSC (107 aa)) folds into the BEN domain.

Its function is as follows. Acts as a transcriptional repressor. This chain is BEN domain-containing protein 5 (Bend5), found in Mus musculus (Mouse).